Reading from the N-terminus, the 756-residue chain is Sodium/hydrogen exchanger 8 (756 aa).

Residues 1 to 31 (MTSIIGAALPYKSPEKAIASSSYSAENDSSP) lie on the Extracellular side of the membrane. N27 is a glycosylation site (N-linked (GlcNAc...) asparagine). Residues 32–52 (VDAVIFAGTSLVLGTACRYLF) traverse the membrane as a helical segment. Over 53 to 56 (NGTR) the chain is Cytoplasmic. A helical membrane pass occupies residues 57–77 (VPYTVVLLVIGIFLGSLEYGT). The Extracellular portion of the chain corresponds to 78–89 (KHNLGKLGHGIR). The chain crosses the membrane as a helical span at residues 90–110 (IWNGINPDLLLAVFLPVLLFE). Residues 111-125 (SSFSMDVHQIKRCMG) lie on the Cytoplasmic side of the membrane. Residues 126 to 146 (QMVLLAGPGVLISTFCLGALI) form a helical membrane-spanning segment. The Extracellular portion of the chain corresponds to 147 to 157 (KLTFPYNWDWK). Residues 158 to 178 (TSLLLGGLLGATDPVAVVALL) traverse the membrane as a helical segment. The Cytoplasmic segment spans residues 179-194 (KELGASKKMTTLIDGE). The chain crosses the membrane as a helical span at residues 195 to 215 (SLMNDGVSVVVFQLFFKMVMG). Residues 216-225 (HNSDWGSIIK) lie on the Extracellular side of the membrane. A helical transmembrane segment spans residues 226–248 (FLVQNSFGAVGIGLAFGIASVFW). The Cytoplasmic segment spans residues 249–251 (LKF). The chain crosses the membrane as a helical span at residues 252–271 (IFNDTVAQITVTLSASYFAY). At 272–276 (YTAQE) the chain is on the extracellular side. A helical transmembrane segment spans residues 277–297 (WAGVSGILTVMILGMFFAAFA). The Cytoplasmic portion of the chain corresponds to 298–311 (RTAFKGDSHQSLHH). A helical membrane pass occupies residues 312–332 (FWEMAAYIANTLVFMLSGVII). Topologically, residues 333–350 (AESVLSGQTISYKGNSWS) are extracellular. A helical transmembrane segment spans residues 351–371 (FLFLLYLYVQLSRCVVVGVLY). Topologically, residues 372–385 (PLLCRSGYGLDWKE) are cytoplasmic. Residues 386 to 406 (SIILTWSGLRGAVSLSLALSV) form a helical membrane-spanning segment. The Extracellular segment spans residues 407–422 (KQSSGNSYLSSDTGTR). A helical transmembrane segment spans residues 423 to 443 (FLFLTGGIVFLTLVVNGSTTQ). Residues 444–756 (LLLHLLRMDT…RSLAIGETDA (313 aa)) lie on the Cytoplasmic side of the membrane.

Belongs to the monovalent cation:proton antiporter 1 (CPA1) transporter (TC 2.A.36) family.

It localises to the cell membrane. The enzyme catalyses Na(+)(in) + H(+)(out) = Na(+)(out) + H(+)(in). The catalysed reaction is K(+)(in) + H(+)(out) = K(+)(out) + H(+)(in). Functionally, may act in low affinity electroneutral exchange of protons for cations such as Na(+) or K(+) across membranes. May also exchange Li(+) and Cs(+) with a lower affinity. The protein is Sodium/hydrogen exchanger 8 (NHX8) of Arabidopsis thaliana (Mouse-ear cress).